The chain runs to 94 residues: Large ribosomal subunit protein uL23 (94 aa).

Belongs to the universal ribosomal protein uL23 family. Part of the 50S ribosomal subunit. Contacts protein L29, and trigger factor when it is bound to the ribosome.

Its function is as follows. One of the early assembly proteins it binds 23S rRNA. One of the proteins that surrounds the polypeptide exit tunnel on the outside of the ribosome. Forms the main docking site for trigger factor binding to the ribosome. The sequence is that of Large ribosomal subunit protein uL23 from Trichlorobacter lovleyi (strain ATCC BAA-1151 / DSM 17278 / SZ) (Geobacter lovleyi).